The chain runs to 109 residues: uncharacterized protein (109 aa).

An N-terminal signal peptide occupies residues 1 to 25 (MKGIFLVVQLGFSIMVFLFLAAVNW). Residues 73-95 (YPVMSALMIISFLYVLAALFLLI) traverse the membrane as a helical segment.

Its subcellular location is the membrane. This is an uncharacterized protein from Bacillus subtilis (strain 168).